The sequence spans 466 residues: Soluble pyridine nucleotide transhydrogenase (466 aa).

An FAD-binding site is contributed by 36-45 (ERYHNVGGGC).

This sequence belongs to the class-I pyridine nucleotide-disulfide oxidoreductase family. FAD is required as a cofactor.

Its subcellular location is the cytoplasm. It carries out the reaction NAD(+) + NADPH = NADH + NADP(+). In terms of biological role, conversion of NADPH, generated by peripheral catabolic pathways, to NADH, which can enter the respiratory chain for energy generation. The protein is Soluble pyridine nucleotide transhydrogenase of Salmonella paratyphi C (strain RKS4594).